The chain runs to 123 residues: Small ribosomal subunit protein uS13 (123 aa).

The disordered stretch occupies residues 97-123 (PVRGQRTHTNAKTRKGRSKLPVAAKKK).

It belongs to the universal ribosomal protein uS13 family. In terms of assembly, part of the 30S ribosomal subunit. Forms a loose heterodimer with protein S19. Forms two bridges to the 50S subunit in the 70S ribosome.

In terms of biological role, located at the top of the head of the 30S subunit, it contacts several helices of the 16S rRNA. In the 70S ribosome it contacts the 23S rRNA (bridge B1a) and protein L5 of the 50S subunit (bridge B1b), connecting the 2 subunits; these bridges are implicated in subunit movement. Contacts the tRNAs in the A and P-sites. In Ehrlichia chaffeensis (strain ATCC CRL-10679 / Arkansas), this protein is Small ribosomal subunit protein uS13.